The following is a 124-amino-acid chain: Fluoride-specific ion channel FluC (124 aa).

4 helical membrane-spanning segments follow: residues 5-25 (LVVFVGAGLGGALRHGVNLAA), 36-56 (TMIINIAGSLAMGLLTGWFAV), 70-90 (TGILGGFTTFSTFSLEAFLLM), and 100-120 (LYVLGSVAAGIAGVGASLAVI). Na(+) contacts are provided by G74 and T77.

The protein belongs to the fluoride channel Fluc/FEX (TC 1.A.43) family.

Its subcellular location is the cell inner membrane. It catalyses the reaction fluoride(in) = fluoride(out). Its activity is regulated as follows. Na(+) is not transported, but it plays an essential structural role and its presence is essential for fluoride channel function. Its function is as follows. Fluoride-specific ion channel. Important for reducing fluoride concentration in the cell, thus reducing its toxicity. This chain is Fluoride-specific ion channel FluC, found in Methylobacterium nodulans (strain LMG 21967 / CNCM I-2342 / ORS 2060).